A 468-amino-acid polypeptide reads, in one-letter code: 6-phosphogluconate dehydrogenase, decarboxylating (468 aa).

Residues 10-15, 33-35, 74-76, and Asn-102 contribute to the NADP(+) site; these read GMAVMG, NRS, and VKA. Substrate is bound by residues Asn-102 and 128 to 130; that span reads SGG. The Proton acceptor role is filled by Lys-183. 186–187 provides a ligand contact to substrate; it reads HN. Catalysis depends on Glu-190, which acts as the Proton donor. The substrate site is built by Tyr-191, Lys-260, Arg-287, Arg-445, and His-451.

This sequence belongs to the 6-phosphogluconate dehydrogenase family. As to quaternary structure, homodimer.

The catalysed reaction is 6-phospho-D-gluconate + NADP(+) = D-ribulose 5-phosphate + CO2 + NADPH. It functions in the pathway carbohydrate degradation; pentose phosphate pathway; D-ribulose 5-phosphate from D-glucose 6-phosphate (oxidative stage): step 3/3. In terms of biological role, catalyzes the oxidative decarboxylation of 6-phosphogluconate to ribulose 5-phosphate and CO(2), with concomitant reduction of NADP to NADPH. The sequence is that of 6-phosphogluconate dehydrogenase, decarboxylating (gnd) from Shigella flexneri.